Reading from the N-terminus, the 296-residue chain is Ribosomal RNA small subunit methyltransferase H (296 aa).

Residues 41–43 (GGH), D60, F87, D103, and Q110 contribute to the S-adenosyl-L-methionine site.

The protein belongs to the methyltransferase superfamily. RsmH family.

Its subcellular location is the cytoplasm. The enzyme catalyses cytidine(1402) in 16S rRNA + S-adenosyl-L-methionine = N(4)-methylcytidine(1402) in 16S rRNA + S-adenosyl-L-homocysteine + H(+). Its function is as follows. Specifically methylates the N4 position of cytidine in position 1402 (C1402) of 16S rRNA. In Synechococcus elongatus (strain ATCC 33912 / PCC 7942 / FACHB-805) (Anacystis nidulans R2), this protein is Ribosomal RNA small subunit methyltransferase H.